The chain runs to 172 residues: CD-NTase-associated protein 7 (172 aa).

Positions 141–172 (AQSPGINGYLENDKTYSAGGRSLTRTSVRNFV) are required for binding to CdnC and to confer phage immunity.

It belongs to the bacterial HORMA family. HORMA1 subfamily. In terms of assembly, forms complexes with CdnC with 1:1 and 2:2 stoichimetry, and a 1:1:6 CdnC:Cap7:Cap6 complex.

Its function is as follows. Sensor protein of a CBASS antivirus system. CBASS (cyclic oligonucleotide-based antiphage signaling system) provides immunity against bacteriophage. The CD-NTase protein synthesizes cyclic nucleotides in response to infection; these serve as specific second messenger signals. The signals activate a diverse range of effectors, leading to bacterial cell death and thus abortive phage infection. A type III-C(AAA) CBASS system. Functionally, binds to a closure peptide (consensus His-Xaa-Xaa-Ile-Leu-Leu-Thr), which allows it to activate CdnC for second messenger synthesis. In terms of biological role, protects E.coli strain JP313 against bacteriophage lambda cI- infection. When the cdnC-cap7-cap6-nucC operon is transformed into a susceptible strain it confers bacteriophage immunity. Mutations in the sensor (Cap7 also called HORMA) or effector proteins (CdnC, NucC) but not the disassembly protein (Cap6 also called Trip13) no longer confer immunity. The presence of the intact operon leads to culture collapse and cell death, which occurs before the phage has finished its replication cycle, thus protecting non-infected bacteria by aborting the phage infection and preventing its propagation. The polypeptide is CD-NTase-associated protein 7 (Escherichia coli (strain MS 115-1)).